A 168-amino-acid polypeptide reads, in one-letter code: Disulfide bond formation protein B 2 (168 aa).

The Cytoplasmic portion of the chain corresponds to 1–9 (MLPARLRTF). Residues 10–26 (FLPACLVALAVLVASFR) form a helical membrane-spanning segment. Residues 27–44 (LENTVGLMPCPLCLSQRL) are Periplasmic-facing. The cysteines at positions 36 and 39 are disulfide-linked. Residues 45–61 (LLGGYALLCFAAVLQAP) traverse the membrane as a helical segment. Over 62–67 (GTRGIL) the chain is Cytoplasmic. The chain crosses the membrane as a helical span at residues 68–85 (RYARLALGCSLAGALLAA). Over 86 to 140 (RHVWLQGAEGVNEVCPVPIGRVFEQSWSEAARQLLLGGPDCRSLAWSFLDLTLPE) the chain is Periplasmic. An intrachain disulfide couples cysteine 100 to cysteine 126. A helical transmembrane segment spans residues 141-159 (WSLLAFLLLAVLPLSCLLA). Residues 160–168 (YRFRTLART) are Cytoplasmic-facing.

Belongs to the DsbB family.

It localises to the cell inner membrane. Its function is as follows. Required for disulfide bond formation in some periplasmic proteins. Acts by oxidizing the DsbA protein. The sequence is that of Disulfide bond formation protein B 2 (dsbB2) from Pseudomonas putida (strain ATCC 47054 / DSM 6125 / CFBP 8728 / NCIMB 11950 / KT2440).